A 201-amino-acid chain; its full sequence is Large ribosomal subunit protein bL9 (201 aa).

A compositionally biased stretch (basic and acidic residues) spans 150-165 (EAERQAAGEDLTQRRD). The tract at residues 150–201 (EAERQAAGEDLTQRRDDEEEEAVEAAEFFESEELAPGDEEEEAAGEEEDAKE) is disordered. The span at 166–201 (DEEEEAVEAAEFFESEELAPGDEEEEAAGEEEDAKE) shows a compositional bias: acidic residues.

Belongs to the bacterial ribosomal protein bL9 family.

Binds to the 23S rRNA. The protein is Large ribosomal subunit protein bL9 of Parvibaculum lavamentivorans (strain DS-1 / DSM 13023 / NCIMB 13966).